The sequence spans 938 residues: AP-2 complex subunit alpha-2 (938 aa).

A 1,2-diacyl-sn-glycero-3-phospho-(1D-myo-inositol-3,4,5-trisphosphate) is bound by residues 11 to 12, Lys43, Tyr53, and 57 to 61; these read RG and KYVCK. The disordered stretch occupies residues 616-677; that stretch reads LKKKKGPSTV…APPVPAGPPP (62 aa). The span at 645 to 668 shows a compositional bias: low complexity; the sequence is PALASTSAVSTPSPSADLLGLGAA.

It belongs to the adaptor complexes large subunit family. In terms of assembly, adaptor protein complex 2 (AP-2) is a heterotetramer composed of two large adaptins (alpha-type subunit AP2A1 or AP2A2 and beta-type subunit AP2B1), a medium adaptin (mu-type subunit AP2M1) and a small adaptin (sigma-type subunit AP2S1). Binds clathrin. Binds EPN1, EPS15, AMPH, SNAP91 and BIN1. Interacts with HIP1. Interacts with DGKD. Interacts with DENND1A, DENND1B and DENND1C. Interacts with FCHO1. Interacts with ATAT1; this interaction is required for efficient alpha-tubulin acetylation by ATAT1. Interacts with KIAA1107. Together with AP2B1 and AP2M1, it interacts with ADAM10; this interaction facilitates ADAM10 endocytosis from the plasma membrane during long-term potentiation in hippocampal neurons. Interacts with CLN3 (via dileucine motif). Interacts with ABCB11; this interaction regulates cell membrane expression of ABCB11 through its internalization in a clathrin-dependent manner and its subsequent degradation. Interacts with DNAJC6.

It is found in the cell membrane. The protein localises to the membrane. It localises to the coated pit. Component of the adaptor protein complex 2 (AP-2). Adaptor protein complexes function in protein transport via transport vesicles in different membrane traffic pathways. Adaptor protein complexes are vesicle coat components and appear to be involved in cargo selection and vesicle formation. AP-2 is involved in clathrin-dependent endocytosis in which cargo proteins are incorporated into vesicles surrounded by clathrin (clathrin-coated vesicles, CCVs) which are destined for fusion with the early endosome. The clathrin lattice serves as a mechanical scaffold but is itself unable to bind directly to membrane components. Clathrin-associated adaptor protein (AP) complexes which can bind directly to both the clathrin lattice and to the lipid and protein components of membranes are considered to be the major clathrin adaptors contributing the CCV formation. AP-2 also serves as a cargo receptor to selectively sort the membrane proteins involved in receptor-mediated endocytosis. AP-2 seems to play a role in the recycling of synaptic vesicle membranes from the presynaptic surface. AP-2 recognizes Y-X-X-[FILMV] (Y-X-X-Phi) and [ED]-X-X-X-L-[LI] endocytosis signal motifs within the cytosolic tails of transmembrane cargo molecules. AP-2 may also play a role in maintaining normal post-endocytic trafficking through the ARF6-regulated, non-clathrin pathway. During long-term potentiation in hippocampal neurons, AP-2 is responsible for the endocytosis of ADAM10. The AP-2 alpha subunit binds polyphosphoinositide-containing lipids, positioning AP-2 on the membrane. The AP-2 alpha subunit acts via its C-terminal appendage domain as a scaffolding platform for endocytic accessory proteins. The AP-2 alpha and AP-2 sigma subunits are thought to contribute to the recognition of the [ED]-X-X-X-L-[LI] motif. This is AP-2 complex subunit alpha-2 from Bos taurus (Bovine).